The following is a 192-amino-acid chain: Xanthine phosphoribosyltransferase (192 aa).

The xanthine site is built by L20 and N27. 128-132 provides a ligand contact to 5-phospho-alpha-D-ribose 1-diphosphate; it reads ANGDA. K156 contributes to the xanthine binding site.

This sequence belongs to the purine/pyrimidine phosphoribosyltransferase family. Xpt subfamily. Homodimer.

Its subcellular location is the cytoplasm. It carries out the reaction XMP + diphosphate = xanthine + 5-phospho-alpha-D-ribose 1-diphosphate. The protein operates within purine metabolism; XMP biosynthesis via salvage pathway; XMP from xanthine: step 1/1. Converts the preformed base xanthine, a product of nucleic acid breakdown, to xanthosine 5'-monophosphate (XMP), so it can be reused for RNA or DNA synthesis. The sequence is that of Xanthine phosphoribosyltransferase from Staphylococcus aureus (strain MRSA252).